Consider the following 74-residue polypeptide: RNA-binding protein Hfq (74 aa).

In terms of domain architecture, Sm spans 9–69 (DQFLNQLRKE…ISTFVPQKNV (61 aa)).

It belongs to the Hfq family. Homohexamer.

In terms of biological role, RNA chaperone that binds small regulatory RNA (sRNAs) and mRNAs to facilitate mRNA translational regulation in response to envelope stress, environmental stress and changes in metabolite concentrations. Also binds with high specificity to tRNAs. The chain is RNA-binding protein Hfq from Bacillus cereus (strain Q1).